A 580-amino-acid chain; its full sequence is MGEKAVPLLRRRRVKRSCPSCGPELGVEEKKGKGNPISIQLFPPELVEHIISFLPVRDLVALGQTCRYFHEVCDAEGVWRRICRRLSPRLRDQGSGVRPWKRAAILNYTKGLYFQAFGGRRRCLSKSVAPLLAHGYRRFLPTKDHVFILDYVGTLFFLKNALVSTLGQMQWKRACRYVVLCRGAKDFASDPRCDTVYRKYLYVLATREQQEVVGTTSSRACDCVEVYLQSSGQRVFKMTFHHSMTFKQIVLVGQETQRALLLLTEEGKIYSLVVNETQLDQPRSYTVQLALRKVSHYLPHLRVACMTSNQSSTLYVTDQGGVYFEVHTPGVYRDLFGTLQAFDPLDQQMPLALSLPAKILFCALGYNHLGLVDEFGRIFMQGNNRYGQLGTGDKMDRGEPTQVRYLQRPITLWCGLNHSLVLSQSSEFSKELLGCGCGAGGRLPGWPKGSASFVKLQVKVPLCACALCATRECLYILSSHDIEQHTPYRDLPASRVVGIPEPSLGTGAPQDPGGTAQACEEYLSQIHSCHTLQDRMEKMKEIVGWMPLMAAQKDFFWEALDMLQKAEGGGGGVGPPASET.

Residues P36–I82 form the F-box domain. The RCC1 repeat unit spans residues G376–S425.

In terms of assembly, directly interacts with SKP1 and CUL1.

Its function is as follows. Substrate-recognition component of the SCF (SKP1-CUL1-F-box protein)-type E3 ubiquitin ligase complex. The sequence is that of F-box only protein 24 (FBXO24) from Macaca fascicularis (Crab-eating macaque).